The following is a 426-amino-acid chain: Aspartate aminotransferase, mitochondrial (426 aa).

The N-terminal 29 residues, 1-29 (MIRSARLISNIKFGQKNIRQFSTNTNWWA), are a transit peptide targeting the mitochondrion. Positions 60, 156, and 209 each coordinate substrate. N6-(pyridoxal phosphate)lysine is present on lysine 273. Arginine 401 provides a ligand contact to substrate.

It belongs to the class-I pyridoxal-phosphate-dependent aminotransferase family. In terms of assembly, homodimer. The cofactor is pyridoxal 5'-phosphate.

The protein localises to the mitochondrion matrix. It is found in the cell membrane. It catalyses the reaction L-aspartate + 2-oxoglutarate = oxaloacetate + L-glutamate. The enzyme catalyses L-kynurenine + 2-oxoglutarate = kynurenate + L-glutamate + H2O. Functionally, plays a key role in amino acid metabolism. Important for metabolite exchange between mitochondria and cytosol. In Dictyostelium discoideum (Social amoeba), this protein is Aspartate aminotransferase, mitochondrial (aatA).